We begin with the raw amino-acid sequence, 284 residues long: tRNA uridine(34) hydroxylase (284 aa).

The Rhodanese domain maps to 132-226; sequence DGRPVVMLDT…YFEEVGGAHY (95 aa). Cys186 (cysteine persulfide intermediate) is an active-site residue.

Belongs to the TrhO family.

The catalysed reaction is uridine(34) in tRNA + AH2 + O2 = 5-hydroxyuridine(34) in tRNA + A + H2O. Functionally, catalyzes oxygen-dependent 5-hydroxyuridine (ho5U) modification at position 34 in tRNAs. In Burkholderia vietnamiensis (strain G4 / LMG 22486) (Burkholderia cepacia (strain R1808)), this protein is tRNA uridine(34) hydroxylase.